A 419-amino-acid chain; its full sequence is Menaquinone reductase, integral membrane subunit (419 aa).

Transmembrane regions (helical) follow at residues 23–43 (LSKFMMWMAFVFVFFGWGLYA), 61–81 (FGFGLWITFDLAVIALGAGAF), 98–118 (IINLAVIIGFLCYSGAMLVLV), 143–163 (VIFCITCYCLVLIIEYVPLIL), 176–196 (AVAHNFHVMMPLFAGIGAFLS), 221–241 (FFIWPWTFFLYVLSAVGSGPV), 270–290 (IAGTMLMVYLIFKFADTYAWA), 316–336 (LWAELFYCGLVPAIILIVPAL), 341–361 (VLFYSAAILDCIGITINRYVM), and 383–403 (WAEWGASVMIVAYAALVLSLS).

Belongs to the NrfD family. The Qrc complex is composed of four subunits: QrcA, QrcB, QrcC and QrcD. Can form a supercomplex with the [NiFe] hydrogenase HynA1 and the tetraheme Type I cytochrome c3 TpIc(3), its physiological electron donors.

The protein resides in the cell inner membrane. In terms of biological role, component of the respiratory Qrc complex, that catalyzes the reduction of the menaquinone pool using electrons transferred from the reduced periplasmic cytochrome c3, and which is probably involved in sulfate respiration. Is likely essential for growth on H(2) or formate since the periplasmic hydrogenases and/or formate dehydrogenases act as primary electron donors for the Qrc complex. The QrcD subunit anchors the protein complex to the membrane and likely interacts with the quinone pool. The polypeptide is Menaquinone reductase, integral membrane subunit (Nitratidesulfovibrio vulgaris (strain ATCC 29579 / DSM 644 / CCUG 34227 / NCIMB 8303 / VKM B-1760 / Hildenborough) (Desulfovibrio vulgaris)).